Here is a 123-residue protein sequence, read N- to C-terminus: MKSLILIAMLLMLDCANSLNCRGPYTSYNNKCIWVNRLDKMHHKKTYSEASTTCLITFPMGTLARRSLIDNEKDMKFISKFGMGQSLWIRDDKKPEVGKCAYTDGKTFGFSPCNATYGFVCID.

The C-type lectin domain occupies 21–122 (CRGPYTSYNN…CNATYGFVCI (102 aa)).

This chain is Putative C-type lectin protein FPV003/FPV258, found in Fowlpox virus (strain NVSL) (FPV).